We begin with the raw amino-acid sequence, 461 residues long: Vitamin K-dependent protein C (461 aa).

Residues 1–18 (MWQLTSLLLFVATWGISG) form the signal peptide. T19 carries O-linked (GalNAc...) threonine glycosylation. The propeptide occupies 19–42 (TPAPLDSVFSSSERAHQVLRIRKR). The region spanning 43–88 (ANSFLEELRHSSLERECIEEICDFEEAKEIFQNVDDTLAFWSKHVD) is the Gla domain. 9 positions are modified to 4-carboxyglutamate: E48, E49, E56, E58, E61, E62, E67, E68, and E71. A disulfide bridge connects residues C59 and C64. 4 disulfides stabilise this stretch: C92-C111, C101-C106, C105-C120, and C122-C131. EGF-like domains follow at residues 97-132 (LEHP…RFCQ) and 136-176 (SFLN…LQCH). D113 carries the (3R)-3-hydroxyaspartate modification. N139 is a glycosylation site (N-linked (GlcNAc...) asparagine). 5 disulfides stabilise this stretch: C140–C151, C147–C160, C162–C175, C183–C319, and C238–C254. Positions 212 to 450 (LIDGKMTRRG…YLDWIHGHIR (239 aa)) constitute a Peptidase S1 domain. H253 (charge relay system) is an active-site residue. N290 carries N-linked (GlcNAc...) asparagine glycosylation. D299 acts as the Charge relay system in catalysis. S347 is subject to Phosphoserine; by FAM20C. An N-linked (GlcNAc...) asparagine glycan is attached at N355. Residue N371 is glycosylated (N-linked (GlcNAc...) asparagine; atypical; partial). 2 cysteine pairs are disulfide-bonded: C373–C387 and C398–C426. The active-site Charge relay system is S402.

It belongs to the peptidase S1 family. As to quaternary structure, synthesized as a single chain precursor, which is cleaved into a light chain and a heavy chain held together by a disulfide bond. The enzyme is then activated by thrombin, which cleaves a tetradecapeptide from the amino end of the heavy chain; this reaction, which occurs at the surface of endothelial cells, is strongly promoted by thrombomodulin. Interacts (activated) with iripin-8, a serine protease inhibitor from Ixodes ricinus saliva. In terms of processing, the vitamin K-dependent, enzymatic carboxylation of some Glu residues allows the modified protein to bind calcium. Post-translationally, N- and O-glycosylated. Partial (70%) N-glycosylation of Asn-371 with an atypical N-X-C site produces a higher molecular weight form referred to as alpha. The lower molecular weight form, not N-glycosylated at Asn-371, is beta. O-glycosylated with core 1 or possibly core 8 glycans. The iron and 2-oxoglutarate dependent 3-hydroxylation of aspartate and asparagine is (R) stereospecific within EGF domains. In terms of processing, may be phosphorylated on a Ser or Thr in a region (AA 25-30) of the propeptide. In terms of tissue distribution, plasma; synthesized in the liver.

Its subcellular location is the secreted. The protein localises to the golgi apparatus. It localises to the endoplasmic reticulum. The catalysed reaction is Degradation of blood coagulation factors Va and VIIIa.. Protein C is a vitamin K-dependent serine protease that regulates blood coagulation by inactivating factors Va and VIIIa in the presence of calcium ions and phospholipids. Exerts a protective effect on the endothelial cell barrier function. The polypeptide is Vitamin K-dependent protein C (PROC) (Homo sapiens (Human)).